The chain runs to 695 residues: Elongation factor G (695 aa).

The 276-residue stretch at 10–285 (AKTRNIGIMA…AVIDYLPSPI (276 aa)) folds into the tr-type G domain. GTP-binding positions include 19 to 26 (AHIDAGKT), 83 to 87 (DTPGH), and 137 to 140 (NKMD).

Belongs to the TRAFAC class translation factor GTPase superfamily. Classic translation factor GTPase family. EF-G/EF-2 subfamily.

It is found in the cytoplasm. Functionally, catalyzes the GTP-dependent ribosomal translocation step during translation elongation. During this step, the ribosome changes from the pre-translocational (PRE) to the post-translocational (POST) state as the newly formed A-site-bound peptidyl-tRNA and P-site-bound deacylated tRNA move to the P and E sites, respectively. Catalyzes the coordinated movement of the two tRNA molecules, the mRNA and conformational changes in the ribosome. The polypeptide is Elongation factor G (Limosilactobacillus reuteri (strain DSM 20016) (Lactobacillus reuteri)).